The sequence spans 289 residues: 2-hydroxy-6-oxononadienedioate/2-hydroxy-6-oxononatrienedioate hydrolase (289 aa).

H269 functions as the Proton acceptor in the catalytic mechanism.

The protein belongs to the AB hydrolase superfamily. MhpC family. Homodimer.

It catalyses the reaction (2Z,4E)-2-hydroxy-6-oxonona-2,4-dienedioate + H2O = (2Z)-2-hydroxypenta-2,4-dienoate + succinate + H(+). The enzyme catalyses (2Z,4E,7E)-2-hydroxy-6-oxonona-2,4,7-trienedioate + H2O = (2Z)-2-hydroxypenta-2,4-dienoate + fumarate + H(+). It functions in the pathway aromatic compound metabolism; 3-phenylpropanoate degradation. Its function is as follows. Catalyzes the cleavage of the C5-C6 bond of 2-hydroxy-6-oxononadienedioate and 2-hydroxy-6-oxononatrienedioate, a dienol ring fission product of the bacterial meta-cleavage pathway for degradation of phenylpropionic acid. This is 2-hydroxy-6-oxononadienedioate/2-hydroxy-6-oxononatrienedioate hydrolase from Cupriavidus pinatubonensis (strain JMP 134 / LMG 1197) (Cupriavidus necator (strain JMP 134)).